Reading from the N-terminus, the 1111-residue chain is MATTEPSVEQLETKTAKLKLENTTKRDTLIELEKKYQQKWQEEKAFEVDAPLEDVPIDELRKKYPKFFGNMPYPYMNGALHLGHAFTLSKVEFTTAFERLNGKRVLFPMGFHCTGMPICASADRLSREIEMFGPSFDVPEEKEEEVEVEVKTPNAREDVTKHSGKKSKAAAKTAAVKYQFQIMESLGVPRTEIHKFADAKYWLSYFPPLCQRDCTEFGLGIDWRRSFITTDVNPYYDSFVRWQVNHLHDSGKIKFGERYTVYSIKDGQPCMDHDRKSGEGVGPQEYTGIKMEVLEFPEAARKALQSIDLSNKKVCMIAATLRPETMYGQTNCYVGPNITYGIYESNVPNELFICTRRAANNMAYQKLSKERGVVSELGTIKGQDLIGALVNAPLSVHKQVYVLPMETVLATKGTGVVTSVPSDSPDDFATLTELRKKAEFYHLNPEWMKYEAVPIIRTPSYGDMCAEFLCKKLKIQSPKDVKQLAQAKELAYKECFYQGTMIIGKYSGEKVETAKPKVRKELIDQGLAFVYNEPEGQVISRSGDDCIVALCDQWFLDYGEASWKAVTEKALDRLNTFSPEVRNGFLKTLDWLSQWACARSYGLGTRLPWDPQFLVESLTDSTIYMAYYTICHLLHSDVYGKVPGALNIKPEQMTPEVWDHVFRQAPKPKNTSISDEALARLCREFQYFYPFDIRASGKDLVPNHLTFCLYTHTAIFDEKYWPKGIRANGHLLMNGEKMSKSTGNFMTLHEATKKFGADATRLALADAGDTVDDANFEEALANSAILRLYTQEAWCKEMMENLDNLRTGPYNFHDKVFENEINQLIESSREAFSATLFKAALKSCFYDLQNARDWYREVTADRKMHRDLVCRWIETQVLLLATFAPHWSEHIWLTTLKKPQSIHVSGRFPQVSSPVNTALSNSLLYIRTLSRVIREAEAAQLKRQKKGKGMLFDPSKPKRLTVFVAEKFPEWQAQYVALLQKYYNESENKFDDKAIISSVDKKEMKRAMPFIQQFKQSVINRGEHVSANSIFSRELGFNELEVLREVKPYLVRNVGIQELRIVLLQKPADKSSAAIGLVESGSDAGATVEIAPNFANTVPGQPTFLFENVSA.

The short motif at 74–84 (PYMNGALHLGH) is the 'HIGH' region element. Residue Ser-460 is modified to Phosphoserine. Residues 737–741 (KMSKS) carry the 'KMSKS' region motif. Residue Lys-740 participates in ATP binding.

This sequence belongs to the class-I aminoacyl-tRNA synthetase family.

The protein localises to the cytoplasm. The enzyme catalyses tRNA(Leu) + L-leucine + ATP = L-leucyl-tRNA(Leu) + AMP + diphosphate. This chain is Putative leucine--tRNA ligase, cytoplasmic (lrs1), found in Schizosaccharomyces pombe (strain 972 / ATCC 24843) (Fission yeast).